The sequence spans 847 residues: DNA mismatch repair protein MutS (847 aa).

Residue 602–609 (GPNMSGKS) coordinates ATP.

The protein belongs to the DNA mismatch repair MutS family.

This protein is involved in the repair of mismatches in DNA. It is possible that it carries out the mismatch recognition step. This protein has a weak ATPase activity. The protein is DNA mismatch repair protein MutS of Streptococcus uberis (strain ATCC BAA-854 / 0140J).